The chain runs to 186 residues: MQSVDLTHHFLIAMPAMTDPFFAKTLTYICEHSDQGALGLVVNRPIDLTLKDLLDQLDISSDDQLTRRFPIMFGGPIQLDRGFVLHQPVGEWQSTMAVNDDVGLTTSLDILRAIANGESPRQLLVALGYSGWAPGQIEHELSRNAWLTVPASPAIIFELPAEERLTAAMRLLGVDFSSLSDEVGHA.

Belongs to the UPF0301 (AlgH) family.

This chain is UPF0301 protein Nmul_A2478, found in Nitrosospira multiformis (strain ATCC 25196 / NCIMB 11849 / C 71).